We begin with the raw amino-acid sequence, 369 residues long: Superinfection exclusion protein (369 aa).

A signal peptide spans 1 to 15 (MIALLILSLTCSAST).

This sequence belongs to the serpin family. Orthopoxvirus OPG040 subfamily. As to quaternary structure, interacts with A56 protein.

Its subcellular location is the virion membrane. The protein resides in the host cell membrane. Functionally, prevents cell to cell fusion via its interaction with A56 protein. The A56-K2 complex associates with components of the entry fusion complex (EFC) presumably to avoid superinfection and syncytium formation. This is Superinfection exclusion protein (OPG040) from Vaccinia virus (strain Ankara) (VACV).